Here is a 90-residue protein sequence, read N- to C-terminus: Mitochondrial import inner membrane translocase subunit Tim8 A (90 aa).

Positions 36–59 match the Twin CX3C motif motif; the sequence is CWEKCMDKPGPKLDSRTEVCFVNC. Intrachain disulfides connect Cys-36–Cys-59 and Cys-40–Cys-55.

This sequence belongs to the small Tim family. Heterohexamer; composed of 3 copies of TIMM8A and 3 copies of TIMM13, named soluble 70 kDa complex. Associates with the TIM22 complex, whose core is composed of TIMM22.

The protein localises to the mitochondrion inner membrane. Its function is as follows. Mitochondrial intermembrane chaperone that participates in the import and insertion of some multi-pass transmembrane proteins into the mitochondrial inner membrane. Also required for the transfer of beta-barrel precursors from the TOM complex to the sorting and assembly machinery (SAM complex) of the outer membrane. Acts as a chaperone-like protein that protects the hydrophobic precursors from aggregation and guide them through the mitochondrial intermembrane space. The TIMM8-TIMM13 complex mediates the import of some proteins while the predominant TIMM9-TIMM10 70 kDa complex mediates the import of much more proteins. This Danio rerio (Zebrafish) protein is Mitochondrial import inner membrane translocase subunit Tim8 A (timm8a).